A 182-amino-acid polypeptide reads, in one-letter code: Interferon gamma 1 (182 aa).

A signal peptide spans 1 to 21 (MIAQNMTIFFWGVCLLTSGWA). An N-linked (GlcNAc...) asparagine glycan is attached at Asn-93.

Belongs to the type II (or gamma) interferon family. Homodimer. Highly expressed in spleen. Also detected at lower levels in brain, gill, kidney, heart, intestine and muscle. In immune cell populations, has highest expression in peripheral blood leukocytes and splenocytes. Detected in kidney-derived monocytes, neutrophils, macrophages and leukocytes.

The protein resides in the secreted. Functionally, cytokine which binds to interferon gamma receptor 1-like (ifngr1l). Has activating effects on primary macrophages and neutrophils. Induces nitric oxide production and phagocytic responses in macrophages. Primes macrophages and neutrophils for production of reactive oxygen intermediates (ROI). Stimulates phosphorylation and nuclear localization of the JAK/STAT signal transducer stat1. Promotes increased expression of a number of genes important for macrophage activity, including the interferon regulatory factors irf1, irf2, irf8 and irf9. The protein is Interferon gamma 1 of Carassius auratus (Goldfish).